The sequence spans 240 residues: UDP-2,3-diacylglucosamine hydrolase (240 aa).

Positions 8, 10, 41, 79, and 114 each coordinate Mn(2+). Residue 79–80 (NR) coordinates substrate. D122, S160, N164, K167, and H195 together coordinate substrate. 2 residues coordinate Mn(2+): H195 and H197.

Belongs to the LpxH family. Mn(2+) serves as cofactor.

Its subcellular location is the cell inner membrane. It catalyses the reaction UDP-2-N,3-O-bis[(3R)-3-hydroxytetradecanoyl]-alpha-D-glucosamine + H2O = 2-N,3-O-bis[(3R)-3-hydroxytetradecanoyl]-alpha-D-glucosaminyl 1-phosphate + UMP + 2 H(+). It participates in glycolipid biosynthesis; lipid IV(A) biosynthesis; lipid IV(A) from (3R)-3-hydroxytetradecanoyl-[acyl-carrier-protein] and UDP-N-acetyl-alpha-D-glucosamine: step 4/6. Hydrolyzes the pyrophosphate bond of UDP-2,3-diacylglucosamine to yield 2,3-diacylglucosamine 1-phosphate (lipid X) and UMP by catalyzing the attack of water at the alpha-P atom. Involved in the biosynthesis of lipid A, a phosphorylated glycolipid that anchors the lipopolysaccharide to the outer membrane of the cell. The chain is UDP-2,3-diacylglucosamine hydrolase from Salmonella arizonae (strain ATCC BAA-731 / CDC346-86 / RSK2980).